The following is a 299-amino-acid chain: Ribosomal RNA small subunit methyltransferase H (299 aa).

Residues 32-34, Asp52, Phe79, Asp100, and Gln107 contribute to the S-adenosyl-L-methionine site; that span reads AGH.

The protein belongs to the methyltransferase superfamily. RsmH family.

It is found in the cytoplasm. It carries out the reaction cytidine(1402) in 16S rRNA + S-adenosyl-L-methionine = N(4)-methylcytidine(1402) in 16S rRNA + S-adenosyl-L-homocysteine + H(+). Its function is as follows. Specifically methylates the N4 position of cytidine in position 1402 (C1402) of 16S rRNA. The chain is Ribosomal RNA small subunit methyltransferase H from Mycoplasmopsis pulmonis (strain UAB CTIP) (Mycoplasma pulmonis).